The sequence spans 51 residues: Large ribosomal subunit protein bL33 (51 aa).

This sequence belongs to the bacterial ribosomal protein bL33 family.

This Pseudoalteromonas atlantica (strain T6c / ATCC BAA-1087) protein is Large ribosomal subunit protein bL33.